The following is a 349-amino-acid chain: Protein O-mannose kinase (349 aa).

Residues 1–19 are Cytoplasmic-facing; it reads MGQQHGTRNGLTHRELPRG. A helical; Signal-anchor for type II membrane protein membrane pass occupies residues 20–42; that stretch reads VGLLLAMALMNVALYLCLDQLFI. Topologically, residues 43-349 are lumenal; that stretch reads SPGRSTADSR…TVMSQTKEML (307 aa). N-linked (GlcNAc...) asparagine glycans are attached at residues N66, N164, and N219. A Protein kinase domain is found at 80–349; the sequence is VRQLKRVGEG…TVMSQTKEML (270 aa).

The protein belongs to the protein kinase superfamily. Ser/Thr protein kinase family. STKL subfamily.

The protein resides in the endoplasmic reticulum membrane. It carries out the reaction 3-O-[beta-D-GalNAc-(1-&gt;3)-beta-D-GlcNAc-(1-&gt;4)-alpha-D-Man]-L-Thr-[protein] + ATP = 3-O-[beta-D-GalNAc-(1-&gt;3)-beta-D-GlcNAc-(1-&gt;4)-(O-6-P-alpha-D-Man)]-Thr-[protein] + ADP + H(+). Its function is as follows. Protein O-mannose kinase that specifically mediates phosphorylation at the 6-position of an O-mannose of the trisaccharide (N-acetylgalactosamine (GalNAc)-beta-1,3-N-acetylglucosamine (GlcNAc)-beta-1,4-mannose) to generate phosphorylated O-mannosyl trisaccharide (N-acetylgalactosamine-beta-1,3-N-acetylglucosamine-beta-1,4-(phosphate-6-)mannose). Phosphorylated O-mannosyl trisaccharide is a carbohydrate structure present in alpha-dystroglycan (DAG1), which is required for binding laminin G-like domain-containing extracellular proteins with high affinity. Only shows kinase activity when the GalNAc-beta-3-GlcNAc-beta-terminus is linked to the 4-position of O-mannose, suggesting that this disaccharide serves as the substrate recognition motif. The polypeptide is Protein O-mannose kinase (Pomk) (Mus musculus (Mouse)).